Reading from the N-terminus, the 157-residue chain is Small ribosomal subunit protein uS7 (157 aa).

The protein belongs to the universal ribosomal protein uS7 family. In terms of assembly, part of the 30S ribosomal subunit. Contacts proteins S9 and S11.

One of the primary rRNA binding proteins, it binds directly to 16S rRNA where it nucleates assembly of the head domain of the 30S subunit. Is located at the subunit interface close to the decoding center, probably blocks exit of the E-site tRNA. In Chlamydia abortus (strain DSM 27085 / S26/3) (Chlamydophila abortus), this protein is Small ribosomal subunit protein uS7.